The following is a 49-amino-acid chain: Large ribosomal subunit protein bL33A (49 aa).

It belongs to the bacterial ribosomal protein bL33 family.

In Enterococcus faecalis (strain ATCC 700802 / V583), this protein is Large ribosomal subunit protein bL33A (rpmG1).